Consider the following 1037-residue polypeptide: Caspase recruitment domain-containing protein 6 (1037 aa).

At Ala-2 the chain carries N-acetylalanine. In terms of domain architecture, CARD spans 3–94; that stretch reads TESTPSEIIE…QSAAICGLRH (92 aa). Ser-154 carries the post-translational modification Phosphoserine. 3 disordered regions span residues 235–270, 669–704, and 887–1037; these read DPEHVGYDGEEDFENSETTEFSGEEPSYEGSETSLS, VSSGENMAGTAEGEGQQRHSQLKSSSKSQALMPIQE, and RTSH…GGKH. Residues 242 to 261 are compositionally biased toward acidic residues; sequence DGEEDFENSETTEFSGEEPS. Low complexity predominate over residues 690–699; the sequence is LKSSSKSQAL. Composition is skewed to polar residues over residues 911–928, 938–954, and 963–984; these read ASQQGVQMKTQGGASNPA, KSSQFKSDQSNPSTVKH, and VPSQPKSSQTKSCQSQPSQTKP. Ser-985 is subject to Phosphoserine. Positions 994 to 1012 are enriched in pro residues; it reads PSQPWPPQSKPSQPRPPQP. Residues 1023 to 1037 are compositionally biased toward basic residues; sequence KAHHSKAGQKRGGKH.

May be involved in apoptosis. The protein is Caspase recruitment domain-containing protein 6 (CARD6) of Homo sapiens (Human).